Here is a 467-residue protein sequence, read N- to C-terminus: uncharacterized protein (467 aa).

Lys-290 is modified (N6-(pyridoxal phosphate)lysine).

This sequence belongs to the class-III pyridoxal-phosphate-dependent aminotransferase family. Requires pyridoxal 5'-phosphate as cofactor.

This is an uncharacterized protein from Sinorhizobium fredii (strain NBRC 101917 / NGR234).